We begin with the raw amino-acid sequence, 272 residues long: Ribosomal RNA small subunit methyltransferase A (272 aa).

The S-adenosyl-L-methionine site is built by asparagine 18, leucine 20, glycine 45, glutamate 66, aspartate 91, and asparagine 113.

It belongs to the class I-like SAM-binding methyltransferase superfamily. rRNA adenine N(6)-methyltransferase family. RsmA subfamily.

The protein localises to the cytoplasm. It carries out the reaction adenosine(1518)/adenosine(1519) in 16S rRNA + 4 S-adenosyl-L-methionine = N(6)-dimethyladenosine(1518)/N(6)-dimethyladenosine(1519) in 16S rRNA + 4 S-adenosyl-L-homocysteine + 4 H(+). Its function is as follows. Specifically dimethylates two adjacent adenosines (A1518 and A1519) in the loop of a conserved hairpin near the 3'-end of 16S rRNA in the 30S particle. May play a critical role in biogenesis of 30S subunits. This chain is Ribosomal RNA small subunit methyltransferase A, found in Photorhabdus laumondii subsp. laumondii (strain DSM 15139 / CIP 105565 / TT01) (Photorhabdus luminescens subsp. laumondii).